The sequence spans 195 residues: MKIYRVLVHLSFVLGMFTKTNTVLAWSKYDLVHGFMRVANISSIMRLDCLPNLLSSNAGYAALPSDDIPTGIFIKVNCSIPEFILWYEQKAMAAWINPIMGTVLMMNDVLKSGLENSVKVGLLTFLKRIAEKGPNGPLRNRGSGCINLIAPADISCYGSTRLDRFNRDFEDDSRGMPCRAKAMRRTTSGSRRANA.

An N-terminal signal peptide occupies residues 1-25 (MKIYRVLVHLSFVLGMFTKTNTVLA). Residues 28-157 (KYDLVHGFMR…LIAPADISCY (130 aa)) are interaction with gH. A gL alphaherpesvirus-type domain is found at 28 to 195 (KYDLVHGFMR…TTSGSRRANA (168 aa)). Intrachain disulfides connect cysteine 49/cysteine 78 and cysteine 156/cysteine 178.

Belongs to the herpesviridae glycoprotein L (gL) family. Alphaherpesvirinae gL subfamily. In terms of assembly, interacts with glycoprotein H (gH); this interaction is necessary for the correct processing and cell surface expression of gH. The heterodimer gH/gL seems to interact with gB trimers during fusion.

The protein resides in the virion membrane. The protein localises to the host cell membrane. It localises to the host Golgi apparatus. It is found in the host trans-Golgi network. Its function is as follows. The heterodimer glycoprotein H-glycoprotein L is required for the fusion of viral and plasma membranes leading to virus entry into the host cell. Acts as a functional inhibitor of gH and maintains gH in an inhibited form. Upon binding to host integrins, gL dissociates from gH leading to activation of the viral fusion glycoproteins gB and gH. The polypeptide is Envelope glycoprotein L (Gallus gallus (Chicken)).